The following is a 277-amino-acid chain: Carbonyl reductase [NADPH] 3 (277 aa).

Serine 2 is subject to N-acetylserine. NADP(+) is bound by residues 10-34 (VTGA…GDVV), 38-42 (RDEAR), 63-64 (DI), and asparagine 90. Serine 30 is subject to Phosphoserine. Substrate is bound at residue serine 140. The active-site Proton acceptor is the tyrosine 194. 194 to 198 (YGVSK) lines the NADP(+) pocket.

It belongs to the short-chain dehydrogenases/reductases (SDR) family.

The protein localises to the cytoplasm. It catalyses the reaction a secondary alcohol + NADP(+) = a ketone + NADPH + H(+). The enzyme catalyses a quinone + NADPH + H(+) = a quinol + NADP(+). Its function is as follows. Catalyzes the NADPH-dependent reduction of carbonyl compounds to their corresponding alcohols. Has low NADPH-dependent oxidoreductase activity. Acts on several orthoquinones, as well as on non-quinone compounds, such as isatin or on the anticancer drug oracin. Best substrates for CBR3 is 1,2- naphthoquinone, hence could play a role in protection against cytotoxicity of exogenous quinones. Exerts activity toward ortho-quinones but not paraquinones. No endogenous substrate for CBR3 except isatin has been identified. This is Carbonyl reductase [NADPH] 3 from Rattus norvegicus (Rat).